The following is a 495-amino-acid chain: Cardiolipin synthase A (495 aa).

The next 2 helical transmembrane spans lie at isoleucine 9–threonine 29 and methionine 46–leucine 66. PLD phosphodiesterase domains follow at residues methionine 227–lysine 254 and glutamate 408–serine 435. Residues histidine 232, lysine 234, aspartate 239, histidine 413, lysine 415, and aspartate 420 contribute to the active site.

The protein belongs to the phospholipase D family. Cardiolipin synthase subfamily. ClsA sub-subfamily.

It is found in the cell membrane. It carries out the reaction 2 a 1,2-diacyl-sn-glycero-3-phospho-(1'-sn-glycerol) = a cardiolipin + glycerol. In terms of biological role, catalyzes the reversible phosphatidyl group transfer from one phosphatidylglycerol molecule to another to form cardiolipin (CL) (diphosphatidylglycerol) and glycerol. This chain is Cardiolipin synthase A, found in Wigglesworthia glossinidia brevipalpis.